A 210-amino-acid chain; its full sequence is High frequency lysogenization protein HflD homolog (210 aa).

The stretch at 103–130 (EAKAKLAERLQQIERQLPLYENDIMADQ) forms a coiled coil.

It belongs to the HflD family.

The protein localises to the cytoplasm. It is found in the cell inner membrane. In Actinobacillus pleuropneumoniae serotype 5b (strain L20), this protein is High frequency lysogenization protein HflD homolog.